A 320-amino-acid chain; its full sequence is Methylenetetrahydrofolate dehydrogenase [NAD(+)] (320 aa).

The active site involves Cys-150. NAD(+)-binding positions include 185 to 186, 208 to 209, and 274 to 276; these read RS, DV, and FAC.

Belongs to the tetrahydrofolate dehydrogenase/cyclohydrolase family. In terms of assembly, homodimer. In terms of processing, the N-terminus is blocked.

It is found in the cytoplasm. Its subcellular location is the nucleus. The enzyme catalyses (6R)-5,10-methylene-5,6,7,8-tetrahydrofolate + NAD(+) = (6R)-5,10-methenyltetrahydrofolate + NADH. Functionally, catalyzes oxidation of cytoplasmic one-carbon units for purine biosynthesis. This Saccharomyces cerevisiae (strain ATCC 204508 / S288c) (Baker's yeast) protein is Methylenetetrahydrofolate dehydrogenase [NAD(+)] (MTD1).